The following is a 394-amino-acid chain: Elongation factor Tu 1 (394 aa).

The 196-residue stretch at 9 to 204 (KPHCNIGTIG…AIDDYIPQPT (196 aa)) folds into the tr-type G domain. The segment at 18–25 (GHVDHGKT) is G1. 18–25 (GHVDHGKT) is a GTP binding site. Mg(2+) is bound at residue Thr-25. A G2 region spans residues 61-65 (GITIQ). The G3 stretch occupies residues 82-85 (DCPG). GTP-binding positions include 82–86 (DCPGH) and 137–140 (NKID). A G4 region spans residues 137-140 (NKID). The segment at 174–176 (SAL) is G5.

Belongs to the TRAFAC class translation factor GTPase superfamily. Classic translation factor GTPase family. EF-Tu/EF-1A subfamily. Monomer.

It localises to the cytoplasm. The enzyme catalyses GTP + H2O = GDP + phosphate + H(+). Its function is as follows. GTP hydrolase that promotes the GTP-dependent binding of aminoacyl-tRNA to the A-site of ribosomes during protein biosynthesis. This is Elongation factor Tu 1 from Orientia tsutsugamushi (strain Boryong) (Rickettsia tsutsugamushi).